The chain runs to 198 residues: Molybdopterin synthase catalytic subunit (198 aa).

Residues 107–108 (HR), Lys123, and 130–132 (KKE) each bind substrate.

Belongs to the MoaE family. MOCS2B subfamily. In terms of assembly, heterotetramer; composed of 2 small (MOCS2A) and 2 large (MOCS2B) subunits.

The protein resides in the cytoplasm. It carries out the reaction 2 [molybdopterin-synthase sulfur-carrier protein]-C-terminal-Gly-aminoethanethioate + cyclic pyranopterin phosphate + H2O = molybdopterin + 2 [molybdopterin-synthase sulfur-carrier protein]-C-terminal Gly-Gly + 2 H(+). The protein operates within cofactor biosynthesis; molybdopterin biosynthesis. Functionally, catalytic subunit of the molybdopterin synthase complex, a complex that catalyzes the conversion of precursor Z into molybdopterin. Acts by mediating the incorporation of 2 sulfur atoms from thiocarboxylated MOCS2A into precursor Z to generate a dithiolene group. This is Molybdopterin synthase catalytic subunit from Arabidopsis thaliana (Mouse-ear cress).